A 551-amino-acid chain; its full sequence is Preprotein translocase subunit SCY1, chloroplastic (551 aa).

Residues 1–67 constitute a chloroplast transit peptide; it reads MITVSEVSSY…WNLGLVINSR (67 aa). A run of 10 helical transmembrane segments spans residues 142–162, 192–212, 241–261, 268–288, 295–315, 328–348, 382–402, 415–435, 482–502, and 503–523; these read FLKL…PLGG, LGIC…FQLL, ASVG…RPYV, WVVS…YIGE, LGNG…PASF, YTGL…IVYV, SAGV…ATLA, FALT…IAFF, VLGS…EQIT, and HLTA…GCAT.

It belongs to the SecY/SEC61-alpha family. Part of the Sec protein translocation apparatus. Interacts with SECE1, ALB3 and probably with SECA1.

It localises to the plastid. The protein resides in the chloroplast thylakoid membrane. Involved in protein export. Probably interacts with other proteins to allow the translocation of proteins across the chloroplast thylakoid membranes. Required for normal greening during embryogenesis. Central subunit of the protein translocation channel SecYE. Consists of two halves formed by TMs 1-5 and 6-10. These two domains form a lateral gate at the front which open onto the bilayer between TMs 2 and 7, and are clamped together by SecE at the back. The channel is closed by both a pore ring composed of hydrophobic SecY resides and a short helix (helix 2A) on the extracellular side of the membrane which forms a plug. The polypeptide is Preprotein translocase subunit SCY1, chloroplastic (SCY1) (Arabidopsis thaliana (Mouse-ear cress)).